The primary structure comprises 158 residues: UPF0102 protein GbCGDNIH1_0975 (158 aa).

This sequence belongs to the UPF0102 family.

The polypeptide is UPF0102 protein GbCGDNIH1_0975 (Granulibacter bethesdensis (strain ATCC BAA-1260 / CGDNIH1)).